Consider the following 118-residue polypeptide: V-type proton ATPase subunit G 2 (118 aa).

The disordered stretch occupies residues arginine 26–arginine 90. The span at glutamine 35 to phenylalanine 55 shows a compositional bias: basic and acidic residues. 2 stretches are compositionally biased toward polar residues: residues glutamine 56–leucine 69 and arginine 78–glutamine 89.

This sequence belongs to the V-ATPase G subunit family. As to quaternary structure, V-ATPase is a heteromultimeric enzyme made up of two complexes: the ATP-hydrolytic V1 complex and the proton translocation V0 complex. The V1 complex consists of three catalytic AB heterodimers that form a heterohexamer, three peripheral stalks each consisting of EG heterodimers, one central rotor including subunits D and F, and the regulatory subunits C and H. The proton translocation complex V0 consists of the proton transport subunit a, a ring of proteolipid subunits c9c'', rotary subunit d, subunits e and f, and the accessory subunits ATP6AP1/Ac45 and ATP6AP2/PRR.

Its subcellular location is the melanosome. The protein resides in the cytoplasmic vesicle. It is found in the clathrin-coated vesicle membrane. Its function is as follows. Subunit of the V1 complex of vacuolar(H+)-ATPase (V-ATPase), a multisubunit enzyme composed of a peripheral complex (V1) that hydrolyzes ATP and a membrane integral complex (V0) that translocates protons. V-ATPase is responsible for acidifying and maintaining the pH of intracellular compartments and in some cell types, is targeted to the plasma membrane, where it is responsible for acidifying the extracellular environment. This Sus scrofa (Pig) protein is V-type proton ATPase subunit G 2 (ATP6V1G2).